The sequence spans 278 residues: Protein lyl-1 (278 aa).

A disordered region spans residues 1-46; the sequence is MCPPQARAEVGSAMTEKTEMVCASSPAPAPPSKPASPGPLSTEEVD. The segment covering 27–37 has biased composition (pro residues); the sequence is APAPPSKPASP. The region spanning 149-201 is the bHLH domain; it reads ARRVFTNSRERWRQQHVNGAFAELRKLLPTHPPDRKLSKNEVLRLAMKYIGFL. The segment at 212 to 278 is disordered; the sequence is LTSGPSAPGS…EQTSLSPEVR (67 aa). Positions 269-278 are enriched in polar residues; sequence EQTSLSPEVR. Ser274 carries the phosphoserine modification.

In terms of assembly, efficient DNA binding requires dimerization with another bHLH protein.

The protein localises to the nucleus. This chain is Protein lyl-1 (Lyl1), found in Mus musculus (Mouse).